Here is a 1206-residue protein sequence, read N- to C-terminus: STE20-like serine/threonine-protein kinase (1206 aa).

Serine 14 carries the phosphoserine modification. The Protein kinase domain occupies 34-292; that stretch reads WEIIGELGDG…TSQLLQHPFV (259 aa). ATP contacts are provided by residues 40–48 and lysine 63; that span reads LGDGAFGKV. Aspartate 155 functions as the Proton acceptor in the catalytic mechanism. Threonine 183 carries the phosphothreonine modification. A Phosphoserine modification is found at serine 189. Residues 308-352 form a disordered region; it reads KAEVTEEVEDGKEEDDDDETESALPIPANKRASSDLSIASSEEDK. Positions 312 to 328 are enriched in acidic residues; the sequence is TEEVEDGKEEDDDDETE. 7 positions are modified to phosphoserine: serine 340, serine 341, serine 344, serine 347, serine 348, serine 354, and serine 372. The tract at residues 364–440 is disordered; it reads SERTEHNTSG…ESQPDTEDQQ (77 aa). 2 stretches are compositionally biased toward basic and acidic residues: residues 381–395 and 420–429; these read LSEK…KTVD and ENGREKKRPQ. The stretch at 468–492 forms a coiled coil; sequence EEDRNEENQEIIENKLTQSEEIKDI. Disordered stretches follow at residues 515–761 and 773–792; these read DNEV…SSSD and TKDS…KTLK. Residues 520-536 are compositionally biased toward basic and acidic residues; that stretch reads FTKEETQEKLGKDDKTH. Residues serine 545 and serine 563 each carry the phosphoserine modification. Residues 556–565 show a composition bias toward polar residues; that stretch reads TQKSAEQSQD. Residues 584–609 are compositionally biased toward basic and acidic residues; the sequence is KATEGPEAHGAEEEPRSGERVEDKQL. Residues 634-643 are compositionally biased toward acidic residues; sequence EEPETDEVDQ. Phosphoserine is present on residues serine 645, serine 649, and serine 668. Residues 691-702 are compositionally biased toward low complexity; the sequence is AEPQAPAASQAS. The span at 747-757 shows a compositional bias: polar residues; the sequence is TDSGTGSTVEN. 2 positions are modified to phosphoserine: serine 776 and serine 778. A Phosphothreonine modification is found at threonine 813. Serine 817 is subject to Phosphoserine. Positions 825–1037 form a coiled coil; the sequence is LRRQELRELR…LKNRQTQERA (213 aa). The UVR domain occupies 874 to 909; the sequence is DQEIENLEKQQKQTIERLEQEHTNRLRDEAKRIKGE. At threonine 1065 the chain carries Phosphothreonine. Residues 1077-1151 are a coiled coil; the sequence is AAQEEKRQKN…ELKEWREKLR (75 aa). The span at 1079–1099 shows a compositional bias: basic and acidic residues; it reads QEEKRQKNERMAQHQKHESQM. Disordered stretches follow at residues 1079 to 1100 and 1181 to 1206; these read QEEK…SQMR and LNPS…AWAG. The segment covering 1181–1200 has biased composition (polar residues); it reads LNPSAQSRGCLQTSHPSSTR.

This sequence belongs to the protein kinase superfamily. STE Ser/Thr protein kinase family. STE20 subfamily. Post-translationally, proteolytically cleaved by caspase-3. In terms of processing, autophosphorylated.

The protein resides in the cytoplasm. It catalyses the reaction L-seryl-[protein] + ATP = O-phospho-L-seryl-[protein] + ADP + H(+). It carries out the reaction L-threonyl-[protein] + ATP = O-phospho-L-threonyl-[protein] + ADP + H(+). Its function is as follows. Mediates apoptosis and actin stress fiber dissolution. This is STE20-like serine/threonine-protein kinase (Slk) from Rattus norvegicus (Rat).